Consider the following 59-residue polypeptide: Cecropin-C (59 aa).

An N-terminal signal peptide occupies residues 1 to 23 (MNFKLIFLVALVLMAAFLGQTEG). Valine 58 is subject to Valine amide.

This sequence belongs to the cecropin family.

Its subcellular location is the secreted. Cecropins have lytic and antibacterial activity against several Gram-positive and Gram-negative bacteria. The polypeptide is Cecropin-C (CecC) (Anopheles gambiae (African malaria mosquito)).